Reading from the N-terminus, the 759-residue chain is Holliday junction resolvase YEN1 (759 aa).

Disordered regions lie at residues 62–83 (RSRS…SQEY), 498–518 (SQSP…TRRQ), and 683–702 (KSRT…KSRS). A compositionally biased stretch (low complexity) spans 500–512 (SPLKRSNSPSRSK). Residues S730 and S731 each carry the phosphoserine modification.

Belongs to the XPG/RAD2 endonuclease family. GEN subfamily.

The protein resides in the cytoplasm. It localises to the nucleus. Endonuclease which resolves Holliday junctions by the introduction of symmetrically related cuts across the junction point, to produce nicked duplex products in which the nicks can be readily ligated. Four-way DNA intermediates, also known as Holliday junctions, are formed during homologous recombination and DNA repair, and their resolution is necessary for proper chromosome segregation. Involved in DNA-damage repair in vegetative cells. In Saccharomyces cerevisiae (strain ATCC 204508 / S288c) (Baker's yeast), this protein is Holliday junction resolvase YEN1 (YEN1).